The following is a 992-amino-acid chain: UPF0182 protein BCG_3215c (992 aa).

7 helical membrane passes run Ile-18–Asp-38, Ile-63–Leu-83, Leu-113–Tyr-133, Leu-175–Ile-195, Val-210–Asp-230, Lys-259–Leu-279, and Ile-287–Val-307. The segment at Pro-906–Pro-938 is disordered. Positions Pro-912–Pro-938 are enriched in pro residues.

Belongs to the UPF0182 family.

It is found in the cell membrane. The sequence is that of UPF0182 protein BCG_3215c from Mycobacterium bovis (strain BCG / Pasteur 1173P2).